Here is a 90-residue protein sequence, read N- to C-terminus: Putative membrane protein insertion efficiency factor (90 aa).

It belongs to the UPF0161 family.

It localises to the cell membrane. Could be involved in insertion of integral membrane proteins into the membrane. In Oceanobacillus iheyensis (strain DSM 14371 / CIP 107618 / JCM 11309 / KCTC 3954 / HTE831), this protein is Putative membrane protein insertion efficiency factor.